A 426-amino-acid polypeptide reads, in one-letter code: tRNA(Ile)-lysidine synthase (426 aa).

Residue 21 to 26 coordinates ATP; sequence SGGLDS.

It belongs to the tRNA(Ile)-lysidine synthase family.

It is found in the cytoplasm. It carries out the reaction cytidine(34) in tRNA(Ile2) + L-lysine + ATP = lysidine(34) in tRNA(Ile2) + AMP + diphosphate + H(+). Its function is as follows. Ligates lysine onto the cytidine present at position 34 of the AUA codon-specific tRNA(Ile) that contains the anticodon CAU, in an ATP-dependent manner. Cytidine is converted to lysidine, thus changing the amino acid specificity of the tRNA from methionine to isoleucine. In Enterobacter sp. (strain 638), this protein is tRNA(Ile)-lysidine synthase.